A 131-amino-acid polypeptide reads, in one-letter code: Amicyanin (131 aa).

Residues 1–26 (MISATKIRSCLAACVLAAFGATGALA) form the signal peptide. Positions 27–131 (DKATIPSESP…PFMRGKVVVE (105 aa)) constitute a Plastocyanin-like domain. 4 residues coordinate Cu cation: His-79, Cys-118, His-121, and Met-124.

Cu cation serves as cofactor.

Its subcellular location is the periplasm. Its pathway is one-carbon metabolism; methylamine degradation. Functionally, primary acceptor of electrons from methylamine dehydrogenase. Passes those electrons on either a soluble cytochrome c or to pseudoazurin. In Paracoccus denitrificans, this protein is Amicyanin (mauC).